The sequence spans 247 residues: 1-(5-phosphoribosyl)-5-[(5-phosphoribosylamino)methylideneamino] imidazole-4-carboxamide isomerase (247 aa).

Asp-8 functions as the Proton acceptor in the catalytic mechanism. Asp-131 serves as the catalytic Proton donor.

The protein belongs to the HisA/HisF family.

The protein localises to the cytoplasm. It carries out the reaction 1-(5-phospho-beta-D-ribosyl)-5-[(5-phospho-beta-D-ribosylamino)methylideneamino]imidazole-4-carboxamide = 5-[(5-phospho-1-deoxy-D-ribulos-1-ylimino)methylamino]-1-(5-phospho-beta-D-ribosyl)imidazole-4-carboxamide. It participates in amino-acid biosynthesis; L-histidine biosynthesis; L-histidine from 5-phospho-alpha-D-ribose 1-diphosphate: step 4/9. This Methylobacillus flagellatus (strain ATCC 51484 / DSM 6875 / VKM B-1610 / KT) protein is 1-(5-phosphoribosyl)-5-[(5-phosphoribosylamino)methylideneamino] imidazole-4-carboxamide isomerase.